The following is a 106-amino-acid chain: Iron-sulfur cluster assembly protein CyaY (106 aa).

It belongs to the frataxin family.

Its function is as follows. Involved in iron-sulfur (Fe-S) cluster assembly. May act as a regulator of Fe-S biogenesis. The sequence is that of Iron-sulfur cluster assembly protein CyaY from Salmonella typhimurium (strain LT2 / SGSC1412 / ATCC 700720).